The primary structure comprises 611 residues: tRNA uridine 5-carboxymethylaminomethyl modification enzyme MnmG (611 aa).

FAD-binding positions include 12–17, V124, and S179; that span reads GGGHAG. 271–285 contacts NAD(+); sequence GPRYCPSVEDKIVRF. Q368 is a binding site for FAD.

Belongs to the MnmG family. Homodimer. Heterotetramer of two MnmE and two MnmG subunits. FAD serves as cofactor.

Its subcellular location is the cytoplasm. In terms of biological role, NAD-binding protein involved in the addition of a carboxymethylaminomethyl (cmnm) group at the wobble position (U34) of certain tRNAs, forming tRNA-cmnm(5)s(2)U34. This chain is tRNA uridine 5-carboxymethylaminomethyl modification enzyme MnmG, found in Mycoplasma mobile (strain ATCC 43663 / 163K / NCTC 11711) (Mesomycoplasma mobile).